The sequence spans 432 residues: CinA-like protein (432 aa).

It belongs to the CinA family.

This Colwellia psychrerythraea (strain 34H / ATCC BAA-681) (Vibrio psychroerythus) protein is CinA-like protein.